A 154-amino-acid polypeptide reads, in one-letter code: Large ribosomal subunit protein uL30 (154 aa).

The segment at 122–141 (RGGHDGIKTPASDGGQLGKH) is disordered.

Belongs to the universal ribosomal protein uL30 family. In terms of assembly, part of the 50S ribosomal subunit.

The protein is Large ribosomal subunit protein uL30 of Halobacterium salinarum (strain ATCC 29341 / DSM 671 / R1).